A 133-amino-acid polypeptide reads, in one-letter code: ATP synthase epsilon chain, chloroplastic (133 aa).

It belongs to the ATPase epsilon chain family. As to quaternary structure, F-type ATPases have 2 components, CF(1) - the catalytic core - and CF(0) - the membrane proton channel. CF(1) has five subunits: alpha(3), beta(3), gamma(1), delta(1), epsilon(1). CF(0) has three main subunits: a, b and c.

The protein localises to the plastid. It is found in the chloroplast thylakoid membrane. Its function is as follows. Produces ATP from ADP in the presence of a proton gradient across the membrane. This is ATP synthase epsilon chain, chloroplastic from Atropa belladonna (Belladonna).